A 334-amino-acid chain; its full sequence is Putative peptide import ATP-binding protein BAB2_1053 (334 aa).

The ABC transporter domain occupies 22-272 (VRTDDLVRDF…PLHPYSRALL (251 aa)). 64-71 (GESGSGKS) provides a ligand contact to ATP.

Belongs to the ABC transporter superfamily. As to quaternary structure, the complex is composed of two ATP-binding proteins (BAB2_1052 and BAB2_1053), two transmembrane proteins (BAB2_1050 and BAB2_1051) and a solute-binding protein (BAB2_1049).

The protein localises to the cell inner membrane. Functionally, probably part of an ABC transporter complex that could be involved in peptide import. Probably responsible for energy coupling to the transport system. This chain is Putative peptide import ATP-binding protein BAB2_1053, found in Brucella abortus (strain 2308).